A 116-amino-acid chain; its full sequence is Endoribonuclease toxin ChpB (116 aa).

It belongs to the PemK/MazF family. As to quaternary structure, homodimer, interacts with ChpS, which inhibits the endoribonuclease activity.

Stimulated in vitro in a concentration-dependent fashion by extracellular death factor (EDF, a quorum sensing pentapeptide sequence NNWNN, probably produced from the zwf gene product glucose-6-phosphate 1-dehydrogenase), which is able to overcome inhibition by cognate antitoxin ChpS. Its function is as follows. Toxic component of a type II toxin-antitoxin (TA) system. ChpB is a sequence-specific mRNA and (weak) tmRNA endoribonuclease that inhibits protein synthesis and induces bacterial stasis. Cleavage is independent of the ribosome. Cleavage occurs at ACY sequences where Y is not C. The endoribonuclease activity is not as strong as that of MazF. The endoribonuclease activity (a toxin) is inhibited by its labile cognate antitoxin ChpS. Toxicity results when the levels of ChpS decrease in the cell, leading to mRNA degradation. Both ChpS and ChpB probably bind to the promoter region of the chpS-chpB operon to autoregulate their synthesis. This is Endoribonuclease toxin ChpB (chpB) from Escherichia coli (strain K12).